Consider the following 338-residue polypeptide: Methionine import ATP-binding protein MetN 2 (338 aa).

The 241-residue stretch at 2–242 (IQLEGVSVDF…PQHAFTRQLV (241 aa)) folds into the ABC transporter domain. 39–46 (GTSGAGKS) provides a ligand contact to ATP.

The protein belongs to the ABC transporter superfamily. Methionine importer (TC 3.A.1.24) family. As to quaternary structure, the complex is composed of two ATP-binding proteins (MetN), two transmembrane proteins (MetI) and a solute-binding protein (MetQ).

It is found in the cell inner membrane. It carries out the reaction L-methionine(out) + ATP + H2O = L-methionine(in) + ADP + phosphate + H(+). It catalyses the reaction D-methionine(out) + ATP + H2O = D-methionine(in) + ADP + phosphate + H(+). In terms of biological role, part of the ABC transporter complex MetNIQ involved in methionine import. Responsible for energy coupling to the transport system. This Pectobacterium atrosepticum (strain SCRI 1043 / ATCC BAA-672) (Erwinia carotovora subsp. atroseptica) protein is Methionine import ATP-binding protein MetN 2.